Reading from the N-terminus, the 44-residue chain is Phosphatase RapE inhibitor (44 aa).

Propeptides lie at residues 1–30 (MKSK…MKEA) and 36–44 (LAPTHEFLV).

The protein belongs to the Phr family. Post-translationally, contains a predicted signal peptide cleavage site in the N-terminal region, however the propeptide is probably only subject to processing events at the ends of the mature peptide.

Its subcellular location is the secreted. It localises to the cytoplasm. Functionally, signaling molecule involved in the regulation of sporulation. Secreted during production, but the mature peptide acts intracellularly, indicating that it needs to be imported into the cell to function. Inhibitor of the RapE phosphatase activity. Does not inhibit the phosphatase activity of RapA and RapB. Probably plays a dispensable role in the overall context of sporulation initiation. This Bacillus subtilis (strain 168) protein is Phosphatase RapE inhibitor (phrE).